We begin with the raw amino-acid sequence, 149 residues long: UPF0260 protein Psyr_1567 (149 aa).

The protein belongs to the UPF0260 family.

The protein is UPF0260 protein Psyr_1567 of Pseudomonas syringae pv. syringae (strain B728a).